A 373-amino-acid chain; its full sequence is Polygalacturonase (373 aa).

The N-terminal stretch at 1–24 is a signal peptide; it reads MVRNIVSRLCSQLFALPSSSLQER. Cysteine 27 and cysteine 42 are disulfide-bonded. N-linked (GlcNAc...) asparagine glycans are attached at residues asparagine 65 and asparagine 94. PbH1 repeat units lie at residues 136-158, 159-197, 198-219, 220-240, 249-270, 278-300, 312-333, and 345-369; these read TGNSKITNLNIQNWPVHCFDITG, SSQLTISGLILDNRAGDKPNAKSGSLPAAHNTDGFDISS, SDHVTLDNNHVYNQDDCVAVTS, GTNIVVSNMYCSGGHGLSIGS, VDGVQFLSSQVVNSQNGCRIKS, INNVTYQNIALTNISTYGVDVQQ, TNGVKISNIKFIKVTGTVASSA, and CSGFTFSGNAITGGGKTSSCNYPTN. The Proton donor role is filled by aspartate 212. The cysteines at positions 214 and 230 are disulfide-linked. Histidine 234 is a catalytic residue. N-linked (GlcNAc...) asparagine glycosylation is found at asparagine 280 and asparagine 290. 2 disulfide bridges follow: cysteine 340/cysteine 345 and cysteine 364/cysteine 371.

The protein belongs to the glycosyl hydrolase 28 family.

The protein localises to the secreted. The catalysed reaction is (1,4-alpha-D-galacturonosyl)n+m + H2O = (1,4-alpha-D-galacturonosyl)n + (1,4-alpha-D-galacturonosyl)m.. Its function is as follows. Involved in maceration and soft-rotting of plant tissue. Hydrolyzes the 1,4-alpha glycosidic bonds of de-esterified pectate in the smooth region of the plant cell wall. This is Polygalacturonase (PGA) from Fusarium fujikuroi (Bakanae and foot rot disease fungus).